The primary structure comprises 386 residues: Phosphoglycerate kinase (386 aa).

Substrate is bound by residues 21-23 (DLN), arginine 36, 59-62 (HLGR), arginine 112, and arginine 145. ATP contacts are provided by residues lysine 196, glutamate 313, and 339-342 (GGDT).

The protein belongs to the phosphoglycerate kinase family. As to quaternary structure, monomer.

Its subcellular location is the cytoplasm. It catalyses the reaction (2R)-3-phosphoglycerate + ATP = (2R)-3-phospho-glyceroyl phosphate + ADP. It functions in the pathway carbohydrate degradation; glycolysis; pyruvate from D-glyceraldehyde 3-phosphate: step 2/5. The polypeptide is Phosphoglycerate kinase (Haemophilus influenzae (strain PittEE)).